Consider the following 176-residue polypeptide: Peroxiredoxin AHP1 (176 aa).

Serine 2 is subject to N-acetylserine. Residues 9–176 enclose the Thioredoxin domain; that stretch reads FPAGDYKFQY…SSVESVLAHL (168 aa). Serine 28 bears the Phosphoserine mark. Lysine 32 participates in a covalent cross-link: Glycyl lysine isopeptide (Lys-Gly) (interchain with G-Cter in URM1). Lysine 48 participates in a covalent cross-link: Glycyl lysine isopeptide (Lys-Gly) (interchain with G-Cter in ubiquitin); alternate. Residue lysine 48 forms a Glycyl lysine isopeptide (Lys-Gly) (interchain with G-Cter in URM1); alternate linkage. Phosphoserine is present on serine 59. The active-site Cysteine sulfenic acid (-SOH) intermediate is the cysteine 62. Residue cysteine 62 is modified to Cysteine persulfide. Lysine 79 participates in a covalent cross-link: Glycyl lysine isopeptide (Lys-Gly) (interchain with G-Cter in URM1). A Glycyl lysine isopeptide (Lys-Gly) (interchain with G-Cter in ubiquitin); alternate cross-link involves residue lysine 81. Residue lysine 81 forms a Glycyl lysine isopeptide (Lys-Gly) (interchain with G-Cter in URM1); alternate linkage. A Glycyl lysine isopeptide (Lys-Gly) (interchain with G-Cter in URM1) cross-link involves residue lysine 107. Residue lysine 113 forms a Glycyl lysine isopeptide (Lys-Gly) (interchain with G-Cter in ubiquitin) linkage. Serine 116 is subject to Phosphoserine. Cysteine 120 carries the post-translational modification Cysteine persulfide. Lysine 124 participates in a covalent cross-link: Glycyl lysine isopeptide (Lys-Gly) (interchain with G-Cter in URM1). Lysine 156 participates in a covalent cross-link: Glycyl lysine isopeptide (Lys-Gly) (interchain with G-Cter in URM1); alternate. Residue lysine 156 forms a Glycyl lysine isopeptide (Lys-Gly) (interchain with G-Cter in SUMO); alternate linkage.

The protein belongs to the peroxiredoxin family. Prx5 subfamily. As to quaternary structure, homodimer; disulfide-linked, upon oxidation. In terms of processing, conjugated to URM1, a ubiquitin-like protein, in response to oxidative stresses. The attachment of URM1 to lysine residues exclusively depends on the presence of a peroxidatic cysteine in the target protein, with low specificity for the particular residue, motif, or structural context at which urmylation can occur. The URM1-conjugation reaction is mechanistically and directly coupled to the process of cysteine persulfidation, transfering the sulfur atom of the URM1 thiocarboxyl group to redox-active cysteine residues in the target protein if it is exposed to oxidative conditions. Persulfidated on specific redox-active cysteine residues. Persulfidation (also called protein S-sulfhydration) may provide a molecular mechanism that enables cells to protect vulnerable cysteine residues from reactive oxygen species (ROS) under stress conditions.

It localises to the cytoplasm. The enzyme catalyses a hydroperoxide + [thioredoxin]-dithiol = an alcohol + [thioredoxin]-disulfide + H2O. Thiol-specific peroxidase that catalyzes the reduction of hydrogen peroxide and organic hydroperoxides to water and alcohols, respectively. Plays a role in cell protection against oxidative stress by detoxifying peroxides and as sensor of hydrogen peroxide-mediated signaling events. Preferentially eliminates organic peroxides rather than hydrogen peroxide. Relays alkyl hydroperoxides as a signal to the transcription factor CAD1/YAP2 by inducing the formation of intramolecular disulfide bonds in CAD1, which causes its nuclear accumulation and activation. Involved in cellular Mn(2+) homeostasis. The sequence is that of Peroxiredoxin AHP1 from Saccharomyces cerevisiae (strain ATCC 204508 / S288c) (Baker's yeast).